Reading from the N-terminus, the 158-residue chain is Transcription elongation factor GreA (158 aa).

The stretch at 53 to 73 (EQQGMVEARIRDIEAKLSNAQ) forms a coiled coil.

This sequence belongs to the GreA/GreB family.

Necessary for efficient RNA polymerase transcription elongation past template-encoded arresting sites. The arresting sites in DNA have the property of trapping a certain fraction of elongating RNA polymerases that pass through, resulting in locked ternary complexes. Cleavage of the nascent transcript by cleavage factors such as GreA or GreB allows the resumption of elongation from the new 3'terminus. GreA releases sequences of 2 to 3 nucleotides. This chain is Transcription elongation factor GreA, found in Pseudomonas aeruginosa (strain ATCC 15692 / DSM 22644 / CIP 104116 / JCM 14847 / LMG 12228 / 1C / PRS 101 / PAO1).